Reading from the N-terminus, the 173-residue chain is Telomerase RNA component interacting RNase (173 aa).

Positions 1–12 (MAARGRRAEPPG) are enriched in basic and acidic residues. A disordered region spans residues 1 to 119 (MAARGRRAEP…LSFVGKRRGG (119 aa)). Composition is skewed to low complexity over residues 14 to 23 (EAPGPAGSGR) and 43 to 52 (SGSSPVSSGV). A compositionally biased stretch (basic and acidic residues) spans 64–79 (LFKRKMEEEQRQRQEE). Residues 80–90 (PPPGPQRPDPP) show a composition bias toward pro residues. The residue at position 143 (Lys-143) is an N6-acetyllysine.

In terms of assembly, part of the telomerase RNA 3' end complex which contains about 488 proteins.

In terms of biological role, exoribonuclease that is part of the telomerase RNA 3' end processing complex and which has the ability to cleave all four unpaired RNA nucleotides from the 5' end or 3' end with higher efficiency for purine bases. The sequence is that of Telomerase RNA component interacting RNase from Mus musculus (Mouse).